The sequence spans 349 residues: Twinfilin-2-B (349 aa).

ADF-H domains lie at 4 to 139 and 177 to 313; these read QTGI…KHVS and GLSF…DEVH. The interval 321–349 is disordered; sequence QAFAKPKGPAGKRGQKRLIKGPGENGEDS.

The protein belongs to the actin-binding proteins ADF family. Twinfilin subfamily. In terms of assembly, interacts with G-actin; ADP-actin form and capping protein (CP).

The protein resides in the cytoplasm. The protein localises to the cytoskeleton. It localises to the perinuclear region. Functionally, actin-binding protein involved in motile and morphological processes. Inhibits actin polymerization, likely by sequestering G-actin. This Xenopus laevis (African clawed frog) protein is Twinfilin-2-B (twf2-b).